The chain runs to 429 residues: Adenylosuccinate synthetase (429 aa).

GTP is bound by residues 12–18 and 40–42; these read GDEGKGK and GHT. Aspartate 13 acts as the Proton acceptor in catalysis. Residues aspartate 13 and glycine 40 each contribute to the Mg(2+) site. IMP contacts are provided by residues 13-16, 38-41, threonine 129, arginine 143, glutamine 223, threonine 238, and arginine 302; these read DEGK and NAGH. Histidine 41 serves as the catalytic Proton donor. Substrate is bound at residue 298-304; it reads VVTGRKR. Residues arginine 304, 330–332, and 412–414 contribute to the GTP site; these read KLD and STS.

This sequence belongs to the adenylosuccinate synthetase family. In terms of assembly, homodimer. The cofactor is Mg(2+).

It is found in the cytoplasm. It catalyses the reaction IMP + L-aspartate + GTP = N(6)-(1,2-dicarboxyethyl)-AMP + GDP + phosphate + 2 H(+). It functions in the pathway purine metabolism; AMP biosynthesis via de novo pathway; AMP from IMP: step 1/2. Plays an important role in the de novo pathway of purine nucleotide biosynthesis. Catalyzes the first committed step in the biosynthesis of AMP from IMP. In Brucella ovis (strain ATCC 25840 / 63/290 / NCTC 10512), this protein is Adenylosuccinate synthetase.